A 58-amino-acid polypeptide reads, in one-letter code: Metallothionein (58 aa).

The interval 1–29 (MPGPCCNDVCECAAGGCKTGCVCTSCRCS) is beta. A divalent metal cation contacts are provided by Cys-5, Cys-6, Cys-10, Cys-12, Cys-17, Cys-21, Cys-23, Cys-26, Cys-28, Cys-31, Cys-34, Cys-38, Cys-40, Cys-46, Cys-50, Cys-54, Cys-56, and Cys-57. An alpha region spans residues 30 to 58 (PCDKCTSGCKCPSKEECAKTCSKPCECCP).

Its function is as follows. Metallothioneins have a high content of cysteine residues that bind various heavy metals. Class I MTS in crustacea are involved in the sequestration of elevated levels of heavy-metal ions. In Astacus astacus (Noble crayfish), this protein is Metallothionein.